Here is a 198-residue protein sequence, read N- to C-terminus: Ribosome maturation factor RimP (198 aa).

The protein belongs to the RimP family.

The protein resides in the cytoplasm. In terms of biological role, required for maturation of 30S ribosomal subunits. This is Ribosome maturation factor RimP from Rhizobium etli (strain CIAT 652).